Consider the following 763-residue polypeptide: Phosphoglycerol transferase I (763 aa).

The next 4 helical transmembrane spans lie at 4 to 19 (LLSF…IYAW), 26 to 48 (WWFA…LFAS), 76 to 98 (YILP…GWIL), and 105 to 127 (PHHF…ASPA).

The protein belongs to the OpgB family.

Its subcellular location is the cell inner membrane. The enzyme catalyses a phosphatidylglycerol + a membrane-derived-oligosaccharide D-glucose = a 1,2-diacyl-sn-glycerol + a membrane-derived-oligosaccharide 6-(glycerophospho)-D-glucose.. It participates in glycan metabolism; osmoregulated periplasmic glucan (OPG) biosynthesis. In terms of biological role, transfers a phosphoglycerol residue from phosphatidylglycerol to the membrane-bound nascent glucan backbones. This chain is Phosphoglycerol transferase I, found in Shigella flexneri.